The chain runs to 103 residues: Large ribosomal subunit protein eL14 (103 aa).

The protein belongs to the eukaryotic ribosomal protein eL14 family.

This Pyrobaculum islandicum (strain DSM 4184 / JCM 9189 / GEO3) protein is Large ribosomal subunit protein eL14.